Consider the following 215-residue polypeptide: 3-isopropylmalate dehydratase small subunit (215 aa).

This sequence belongs to the LeuD family. LeuD type 1 subfamily. In terms of assembly, heterodimer of LeuC and LeuD.

It catalyses the reaction (2R,3S)-3-isopropylmalate = (2S)-2-isopropylmalate. It functions in the pathway amino-acid biosynthesis; L-leucine biosynthesis; L-leucine from 3-methyl-2-oxobutanoate: step 2/4. Catalyzes the isomerization between 2-isopropylmalate and 3-isopropylmalate, via the formation of 2-isopropylmaleate. The polypeptide is 3-isopropylmalate dehydratase small subunit (Marinobacter nauticus (strain ATCC 700491 / DSM 11845 / VT8) (Marinobacter aquaeolei)).